The following is a 375-amino-acid chain: Chaperone protein DnaJ (375 aa).

One can recognise a J domain in the interval 5–70 (DYYEVLGVSR…QKRAAYDQFG (66 aa)). A CR-type zinc finger spans residues 131 to 209 (GTTVKIRVPS…CHGSGYVEEQ (79 aa)). Zn(2+) contacts are provided by Cys144, Cys147, Cys161, Cys164, Cys183, Cys186, Cys197, and Cys200. CXXCXGXG motif repeat units lie at residues 144–151 (CKSCSGSG), 161–168 (CGTCNGAG), 183–190 (CPRCRGAG), and 197–204 (CRSCHGSG).

The protein belongs to the DnaJ family. Homodimer. The cofactor is Zn(2+).

The protein resides in the cytoplasm. Its function is as follows. Participates actively in the response to hyperosmotic and heat shock by preventing the aggregation of stress-denatured proteins and by disaggregating proteins, also in an autonomous, DnaK-independent fashion. Unfolded proteins bind initially to DnaJ; upon interaction with the DnaJ-bound protein, DnaK hydrolyzes its bound ATP, resulting in the formation of a stable complex. GrpE releases ADP from DnaK; ATP binding to DnaK triggers the release of the substrate protein, thus completing the reaction cycle. Several rounds of ATP-dependent interactions between DnaJ, DnaK and GrpE are required for fully efficient folding. Also involved, together with DnaK and GrpE, in the DNA replication of plasmids through activation of initiation proteins. This chain is Chaperone protein DnaJ, found in Hahella chejuensis (strain KCTC 2396).